The primary structure comprises 512 residues: Gustatory and odorant receptor 63a (512 aa).

The tract at residues 1–24 (MRPSGEKVVKGHGQGNSGHSLSGM) is disordered. Residues 1-129 (MRPSGEKVVK…PARAKFEMNS (129 aa)) lie on the Cytoplasmic side of the membrane. Residues 130-150 (ASFIYSVVFFVLLACYVGYVA) form a helical membrane-spanning segment. The Extracellular segment spans residues 151 to 166 (NNRIHIVRSLSGPFEE). Residues 167 to 187 (AVIAYLFLVNILPIMIIPILW) traverse the membrane as a helical segment. The Cytoplasmic portion of the chain corresponds to 188–222 (YEARKIAKLFNDWDDFEVLYYQISGHSLPLKLRQK). A helical transmembrane segment spans residues 223–243 (AVYIAIVLPILSVLSVVITHV). Over 244–265 (TMSDLNINQVVPYCILDNLTAM) the chain is Extracellular. Asn261 is a glycosylation site (N-linked (GlcNAc...) asparagine). The helical transmembrane segment at 266-285 (LGAWWFLICEAMSITAHLLA) threads the bilayer. Topologically, residues 286-324 (ERFQKALKHIGPAAMVADYRVLWLRLSKLTRDTGNALCY) are cytoplasmic. The helical transmembrane segment at 325-345 (TFVFMSLYLFFIITLSIYGLM) threads the bilayer. At 346-350 (SQLSE) the chain is on the extracellular side. Residues 351-371 (GFGIKDIGLTITALWNIGLLF) form a helical membrane-spanning segment. The Cytoplasmic segment spans residues 372–436 (YICDEAHYAS…FFDVNRTLFK (65 aa)). A helical membrane pass occupies residues 437-457 (GLLTTMVTYLVVLLQFQISIP). Over 458–512 (TDKGDSEGANNITVVDFVMDSLDNDMSLMGASTLSTTTVGTTLPPPIMKLKGRKG) the chain is Extracellular. An N-linked (GlcNAc...) asparagine glycan is attached at Asn468.

Belongs to the insect chemoreceptor superfamily. Gustatory receptor (GR) family. Gr21a subfamily. As to quaternary structure, gr21a and Gr63a probably form a heterodimer that responds to CO(2). In terms of tissue distribution, expressed in the medial aspect of the third antennal segment. Carbon dioxide-responsive neurons coexpress Gr21a and Gr63a in a pair of chemosensory receptors at both larval and adult life stages.

It is found in the cell membrane. In terms of biological role, gustatory and odorant receptor which mediates acceptance or avoidance behavior, depending on its substrates. Gr21a and Gr63a together are sufficient for carbon dioxide detection and avoidance behavior. It is possible that the CO(2) receptors Gr63a and Gr21a activate the TRPC channels through Galpha49B and Plc21C. This innate olfactory avoidance behavior can be inhibited by inhibitory interactions of the odors such as 1-hexanol and 2,3-butanedione with Gr21a and Gr63a. The polypeptide is Gustatory and odorant receptor 63a (Gr63a) (Drosophila melanogaster (Fruit fly)).